Reading from the N-terminus, the 244-residue chain is MSHYHEQFLKQNPLAVLGVLRDLHKAAIPLRLSWNGGQLISKLLAITPDKLVLDFGSQAEDNIAVLKAQHITITAETQGAKVEFTVEQLQQSEYLQLPAFITVPPPTLWFVQRRRYFRISAPLHPPYFCQTKLADNSTLRFRLYDLSLGGMGALLETAKPAELQEGMRFAQIEVNMGQWGVFHFDAQLISISERKVIDGKNETITTPRLSFRFLNVSPTVERQLQRIIFSLEREAREKADKVRD.

A PilZ domain is found at Gln112–Ser230.

This sequence belongs to the YcgR family. As to quaternary structure, monomer. Interacts with MotA in the flagellar basal bodies. In another study it was not seen to interact with MotA, but instead with FliM and FliG, also in the flagellar basal body.

It is found in the bacterial flagellum basal body. Acts as a flagellar brake, regulating swimming and swarming in a bis-(3'-5') cyclic diguanylic acid (c-di-GMP)-dependent manner. When bound to c-di-GMP it binds to elements of the flagellar motor (MotA and/or FliG and FliM, binding to FliM also occurs in the absence of c-di-GMP), causing the motor to slow down. Thus, increasing levels of c-di-GMP lead to decreased motility. Probably binds 1 c-di-GMP dimer per subunit. This Escherichia coli (strain K12) protein is Flagellar brake protein YcgR (ycgR).